Consider the following 64-residue polypeptide: Small ribosomal subunit protein bS18c (64 aa).

The protein belongs to the bacterial ribosomal protein bS18 family. Part of the 30S ribosomal subunit.

Its subcellular location is the plastid. The protein resides in the chloroplast. The protein is Small ribosomal subunit protein bS18c (rps18) of Bigelowiella natans (Pedinomonas minutissima).